The sequence spans 232 residues: Ion-translocating oxidoreductase complex subunit E (232 aa).

6 consecutive transmembrane segments (helical) span residues 18–38 (ALVQ…VTNG), 39–59 (LGLG…VSII), 69–89 (IPIF…LMNA), 93–113 (ELYQ…AIIG), 128–148 (AFDG…LGAM), and 182–202 (PFLL…LIAA).

Belongs to the NqrDE/RnfAE family. In terms of assembly, the complex is composed of six subunits: RnfA, RnfB, RnfC, RnfD, RnfE and RnfG.

The protein localises to the cell inner membrane. In terms of biological role, part of a membrane-bound complex that couples electron transfer with translocation of ions across the membrane. This chain is Ion-translocating oxidoreductase complex subunit E, found in Pseudoalteromonas atlantica (strain T6c / ATCC BAA-1087).